A 464-amino-acid chain; its full sequence is Argininosuccinate lyase (464 aa).

Belongs to the lyase 1 family. Argininosuccinate lyase subfamily.

Its subcellular location is the cytoplasm. It catalyses the reaction 2-(N(omega)-L-arginino)succinate = fumarate + L-arginine. It participates in amino-acid biosynthesis; L-arginine biosynthesis; L-arginine from L-ornithine and carbamoyl phosphate: step 3/3. In Frankia casuarinae (strain DSM 45818 / CECT 9043 / HFP020203 / CcI3), this protein is Argininosuccinate lyase.